The sequence spans 378 residues: Alcohol dehydrogenase class-3 (378 aa).

Alanine 1 carries the post-translational modification N-acetylalanine. Cysteine 46 provides a ligand contact to Zn(2+). Histidine 47 is a binding site for NAD(+). The an alcohol site is built by threonine 48 and histidine 68. Zn(2+)-binding residues include histidine 68, glutamate 69, cysteine 98, cysteine 101, cysteine 104, cysteine 112, and cysteine 176. Residues 201–206, aspartate 225, lysine 230, 294–296, 319–321, and arginine 371 contribute to the NAD(+) site; these read GLGTVG, VGV, and TAF.

Belongs to the zinc-containing alcohol dehydrogenase family. Class-III subfamily. Homodimer. Zn(2+) is required as a cofactor.

Its subcellular location is the cytoplasm. The enzyme catalyses a primary alcohol + NAD(+) = an aldehyde + NADH + H(+). It carries out the reaction a secondary alcohol + NAD(+) = a ketone + NADH + H(+). The catalysed reaction is S-(hydroxymethyl)glutathione + NADP(+) = S-formylglutathione + NADPH + H(+). It catalyses the reaction S-(hydroxymethyl)glutathione + NAD(+) = S-formylglutathione + NADH + H(+). In terms of biological role, class-III ADH is remarkably ineffective in oxidizing ethanol, but it readily catalyzes the oxidation of long-chain primary alcohols and the oxidation of S-(hydroxymethyl) glutathione. The sequence is that of Alcohol dehydrogenase class-3 from Pisum sativum (Garden pea).